A 273-amino-acid polypeptide reads, in one-letter code: MSSHRPQHRLSVPDIQRRKGAGSLVALTAYSTPMARLLDPHADLLLVGDSLGMVLYGMPSTLGVSLEMMVAHTLAVMRGSRRACVVADLPFASYQESPRQAFRNAARLLADSGAQAVKLEGGEEMEETVDFLVRRGIPVLAHIGLMPQQVNAMGGFKAQGRDPESAERVRRDGLAMQRGGAFAVVIEGVGEPLARRLSEELAIPCIGIGASPACDGQVLVSEDLLGLSGEQVPRFVERYARLDREIDEAARRFAEDVRERRFPEARHCFAMRE.

2 residues coordinate Mg(2+): Asp-49 and Asp-88. Residues 49–50 (DS), Asp-88, and Lys-118 each bind 3-methyl-2-oxobutanoate. Position 120 (Glu-120) interacts with Mg(2+). Glu-187 serves as the catalytic Proton acceptor.

Belongs to the PanB family. Homodecamer; pentamer of dimers. Mg(2+) is required as a cofactor.

The protein resides in the cytoplasm. The catalysed reaction is 3-methyl-2-oxobutanoate + (6R)-5,10-methylene-5,6,7,8-tetrahydrofolate + H2O = 2-dehydropantoate + (6S)-5,6,7,8-tetrahydrofolate. It functions in the pathway cofactor biosynthesis; (R)-pantothenate biosynthesis; (R)-pantoate from 3-methyl-2-oxobutanoate: step 1/2. In terms of biological role, catalyzes the reversible reaction in which hydroxymethyl group from 5,10-methylenetetrahydrofolate is transferred onto alpha-ketoisovalerate to form ketopantoate. This Pseudomonas aeruginosa (strain UCBPP-PA14) protein is 3-methyl-2-oxobutanoate hydroxymethyltransferase 1.